We begin with the raw amino-acid sequence, 190 residues long: Large ribosomal subunit protein uL22 (190 aa).

Positions 111–190 (SVQSTKAKAK…TKKKTEGEEK (80 aa)) are disordered. Over residues 125–147 (IKSEDSKNSLKVTESKADSKVDA) the composition is skewed to basic and acidic residues. The segment covering 167-178 (AKVATTKSTATR) has biased composition (low complexity).

This sequence belongs to the universal ribosomal protein uL22 family. As to quaternary structure, part of the 50S ribosomal subunit.

In terms of biological role, this protein binds specifically to 23S rRNA; its binding is stimulated by other ribosomal proteins, e.g. L4, L17, and L20. It is important during the early stages of 50S assembly. It makes multiple contacts with different domains of the 23S rRNA in the assembled 50S subunit and ribosome. Functionally, the globular domain of the protein is located near the polypeptide exit tunnel on the outside of the subunit, while an extended beta-hairpin is found that lines the wall of the exit tunnel in the center of the 70S ribosome. The sequence is that of Large ribosomal subunit protein uL22 from Helicobacter hepaticus (strain ATCC 51449 / 3B1).